The sequence spans 957 residues: Glycine dehydrogenase (decarboxylating) (957 aa).

At Lys-708 the chain carries N6-(pyridoxal phosphate)lysine.

This sequence belongs to the GcvP family. In terms of assembly, the glycine cleavage system is composed of four proteins: P, T, L and H. Pyridoxal 5'-phosphate is required as a cofactor.

The catalysed reaction is N(6)-[(R)-lipoyl]-L-lysyl-[glycine-cleavage complex H protein] + glycine + H(+) = N(6)-[(R)-S(8)-aminomethyldihydrolipoyl]-L-lysyl-[glycine-cleavage complex H protein] + CO2. Its function is as follows. The glycine cleavage system catalyzes the degradation of glycine. The P protein binds the alpha-amino group of glycine through its pyridoxal phosphate cofactor; CO(2) is released and the remaining methylamine moiety is then transferred to the lipoamide cofactor of the H protein. The sequence is that of Glycine dehydrogenase (decarboxylating) from Escherichia coli O157:H7.